Reading from the N-terminus, the 410-residue chain is LL-diaminopimelate aminotransferase (410 aa).

Positions 15 and 42 each coordinate substrate. Pyridoxal 5'-phosphate-binding positions include Tyr-72, 108 to 109, Tyr-132, Asn-186, Tyr-217, and 245 to 247; these read TK and SFS. Positions 109, 132, and 186 each coordinate substrate. Lys-248 carries the post-translational modification N6-(pyridoxal phosphate)lysine. Positions 256 and 291 each coordinate pyridoxal 5'-phosphate. Substrate is bound by residues Asn-291 and Arg-387.

It belongs to the class-I pyridoxal-phosphate-dependent aminotransferase family. LL-diaminopimelate aminotransferase subfamily. As to quaternary structure, homodimer. Pyridoxal 5'-phosphate serves as cofactor.

It catalyses the reaction (2S,6S)-2,6-diaminopimelate + 2-oxoglutarate = (S)-2,3,4,5-tetrahydrodipicolinate + L-glutamate + H2O + H(+). The protein operates within amino-acid biosynthesis; L-lysine biosynthesis via DAP pathway; LL-2,6-diaminopimelate from (S)-tetrahydrodipicolinate (aminotransferase route): step 1/1. Its function is as follows. Involved in the synthesis of meso-diaminopimelate (m-DAP or DL-DAP), required for both lysine and peptidoglycan biosynthesis. Catalyzes the direct conversion of tetrahydrodipicolinate to LL-diaminopimelate. This is LL-diaminopimelate aminotransferase from Lawsonia intracellularis (strain PHE/MN1-00).